The primary structure comprises 211 residues: MRLFLWNAVLTLFVTSLIGALIPEPEVKIEVLQKPFICHRKTKGGDLMLVHYEGYLEKDGSLFHSTHKHNNGQPIWFTLGILEALKGWDQGLKGMCVGEKRKLIIPPALGYGKEGKGKIPPESTLIFNIDLLEIRNGPRSHESFQEMDLNDDWKLSKDEVKAYLKKEFEKHGAVVNESHHDALVEDIFDKEDEDKDGFISAREFTYKHDEL.

The N-terminal stretch at Met-1 to Gly-19 is a signal peptide. An intrachain disulfide couples Cys-38 to Cys-96. A PPIase FKBP-type domain is found at Gly-45–Arg-135. Residues Arg-135 to Lys-170 enclose the EF-hand 1 domain. Residues Asp-148, Asn-150, Asp-152, Lys-154, and Glu-159 each coordinate Ca(2+). Residue Asn-176 is glycosylated (N-linked (GlcNAc...) asparagine). Residues His-179 to Leu-211 form the EF-hand 2 domain. Ca(2+)-binding residues include Asp-192, Asp-194, Asp-196, Phe-198, and Glu-203. A Prevents secretion from ER motif is present at residues His-208–Leu-211.

As to quaternary structure, monomer. Homodimer. Interacts with type III, type IV and type X collagens.

The protein localises to the endoplasmic reticulum lumen. The catalysed reaction is [protein]-peptidylproline (omega=180) = [protein]-peptidylproline (omega=0). Its activity is regulated as follows. Inhibited by tacrolimus/FK506. PPIase which accelerates the folding of proteins during protein synthesis. Has a preference for substrates containing 4-hydroxylproline modifications, including type III collagen. May also target type VI and type X collagens. This is Peptidyl-prolyl cis-trans isomerase FKBP14 (FKBP14) from Homo sapiens (Human).